A 453-amino-acid chain; its full sequence is tRNA-2-methylthio-N(6)-dimethylallyladenosine synthase (453 aa).

Residues 17-135 form the MTTase N-terminal domain; sequence GTFFIETWGC…FPEYLNRAKQ (119 aa). Cys-26, Cys-62, Cys-96, Cys-172, Cys-176, and Cys-179 together coordinate [4Fe-4S] cluster. Positions 158 to 388 constitute a Radical SAM core domain; that stretch reads RKSSTKAFVT…VEVVNKSCEK (231 aa). The 63-residue stretch at 391-453 folds into the TRAM domain; sequence KKYQDRIVKV…LSFSLEGEEV (63 aa).

This sequence belongs to the methylthiotransferase family. MiaB subfamily. As to quaternary structure, monomer. It depends on [4Fe-4S] cluster as a cofactor.

The protein localises to the cytoplasm. The enzyme catalyses N(6)-dimethylallyladenosine(37) in tRNA + (sulfur carrier)-SH + AH2 + 2 S-adenosyl-L-methionine = 2-methylsulfanyl-N(6)-dimethylallyladenosine(37) in tRNA + (sulfur carrier)-H + 5'-deoxyadenosine + L-methionine + A + S-adenosyl-L-homocysteine + 2 H(+). Catalyzes the methylthiolation of N6-(dimethylallyl)adenosine (i(6)A), leading to the formation of 2-methylthio-N6-(dimethylallyl)adenosine (ms(2)i(6)A) at position 37 in tRNAs that read codons beginning with uridine. This Clostridium tetani (strain Massachusetts / E88) protein is tRNA-2-methylthio-N(6)-dimethylallyladenosine synthase.